The chain runs to 89 residues: Putative regulatory protein Nther_1328 (89 aa).

Belongs to the RemA family.

The polypeptide is Putative regulatory protein Nther_1328 (Natranaerobius thermophilus (strain ATCC BAA-1301 / DSM 18059 / JW/NM-WN-LF)).